The following is a 627-amino-acid chain: Sister chromatid cohesion 1 protein 1 (627 aa).

Disordered stretches follow at residues 211–294, 395–416, and 461–510; these read GDDE…TATS, MHNHHQTDHHERSDTSSQNLDS, and GDDV…VAEE. 3 stretches are compositionally biased toward basic and acidic residues: residues 254-263, 272-282, and 395-408; these read EQQENRRDGF, IPDKEEHDRPQ, and MHNHHQTDHHERSD. The span at 467 to 487 shows a compositional bias: polar residues; sequence MPSTPSARGAASINNIEISSK.

It belongs to the rad21 family. As to quaternary structure, component of the cohesin complex. In terms of tissue distribution, isoform 2 is expressed at low levels in buds, leaves and roots, whereas expression of isoform 1 is confined to buds.

It is found in the nucleus. In terms of biological role, involved in chromosome condensation, pairing and segregation during meiosis. Responsible for cohesion between replicated sister chromatids. The sequence is that of Sister chromatid cohesion 1 protein 1 (SYN1) from Arabidopsis thaliana (Mouse-ear cress).